The chain runs to 178 residues: Large ribosomal subunit protein bL25 (178 aa).

Belongs to the bacterial ribosomal protein bL25 family. CTC subfamily. As to quaternary structure, part of the 50S ribosomal subunit; part of the 5S rRNA/L5/L18/L25 subcomplex. Contacts the 5S rRNA. Binds to the 5S rRNA independently of L5 and L18.

Functionally, this is one of the proteins that binds to the 5S RNA in the ribosome where it forms part of the central protuberance. The sequence is that of Large ribosomal subunit protein bL25 from Helicobacter hepaticus (strain ATCC 51449 / 3B1).